The following is a 107-amino-acid chain: UPF0145 protein TT_C0892 (107 aa).

It belongs to the UPF0145 family.

The chain is UPF0145 protein TT_C0892 from Thermus thermophilus (strain ATCC BAA-163 / DSM 7039 / HB27).